The following is a 663-amino-acid chain: LEAF RUST 10 DISEASE-RESISTANCE LOCUS RECEPTOR-LIKE PROTEIN KINASE-like 1.4 (663 aa).

Residues methionine 1 to serine 25 form the signal peptide. The Extracellular segment spans residues serine 26–glycine 241. Asparagine 36, asparagine 64, asparagine 106, asparagine 137, and asparagine 208 each carry an N-linked (GlcNAc...) asparagine glycan. Residues isoleucine 242–isoleucine 262 form a helical membrane-spanning segment. At arginine 263–leucine 663 the chain is on the cytoplasmic side. The disordered stretch occupies residues serine 282 to serine 304. Positions arginine 290 to serine 304 are enriched in low complexity. The 276-residue stretch at glutamate 334 to isoleucine 609 folds into the Protein kinase domain. ATP-binding positions include leucine 340–valine 348 and lysine 362. Residue aspartate 458 is the Proton acceptor of the active site. Residues leucine 637 to leucine 663 form a disordered region. Polar residues predominate over residues tryptophan 653–leucine 663.

This sequence belongs to the protein kinase superfamily. Ser/Thr protein kinase family.

Its subcellular location is the cell membrane. It catalyses the reaction L-seryl-[protein] + ATP = O-phospho-L-seryl-[protein] + ADP + H(+). The catalysed reaction is L-threonyl-[protein] + ATP = O-phospho-L-threonyl-[protein] + ADP + H(+). The sequence is that of LEAF RUST 10 DISEASE-RESISTANCE LOCUS RECEPTOR-LIKE PROTEIN KINASE-like 1.4 from Arabidopsis thaliana (Mouse-ear cress).